Here is a 293-residue protein sequence, read N- to C-terminus: Capsid protein (293 aa).

The tract at residues 1-39 is disordered; it reads MPPKPDPSSSGEAPQAMQPAPPPRAEGHMYAQPEGPGQN.

It belongs to the potexviruses coat protein family.

Its subcellular location is the virion. Required for genome encapsidation. Forms ribonucleoprotein complexes along with TGB1 helicase and viral RNA. The chain is Capsid protein from Solanum tuberosum (Potato).